A 463-amino-acid chain; its full sequence is Steroidogenic factor 1 (463 aa).

The nuclear receptor DNA-binding region spans 10–85; that stretch reads DELCPVCGDK…VGMRLEAVRA (76 aa). The segment at 13–33 adopts an NR C4-type zinc-finger fold; sequence CPVCGDKVSGYHYGLLTCESC. An N6-acetyllysine mark is found at Lys34, Lys38, and Lys72. The NR C4-type zinc finger occupies 49 to 73; the sequence is CTESQNCKIDKTQRKRCPYCRFQKC. Lys119 is covalently cross-linked (Glycyl lysine isopeptide (Lys-Gly) (interchain with G-Cter in SUMO)). Residues 119–160 form a disordered region; the sequence is KLETGPSMGPPPQTDYPLAPALHPGAKGLAPAPPAGPPGDYE. A compositionally biased stretch (low complexity) spans 135–148; it reads PLAPALHPGAKGLA. A Glycyl lysine isopeptide (Lys-Gly) (interchain with G-Cter in SUMO) cross-link involves residue Lys193. Positions 197-216 are disordered; it reads PEPYASPHEPAPPYGYPEPY. Ser202 carries the phosphoserine; by CDK7 modification. A compositionally biased stretch (pro residues) spans 205–216; it reads EPAPPYGYPEPY. An NR LBD domain is found at 224–461; it reads GVPELILKLL…NLLIEMLHAK (238 aa). Positions 343, 438, and 442 each coordinate a 1,2-diacyl-sn-glycero-3-phosphocholine.

This sequence belongs to the nuclear hormone receptor family. NR5 subfamily. As to quaternary structure, binds DNA as a monomer. Part of a complex consisting of SFPQ, NONO and NR5A1. Interacts with NR0B2, NCOA2 and PPARGC1A. Interacts with DGKQ and CDK7. Binds to and activated by HIPK3. In terms of processing, acetylation stimulates the transcriptional activity. Post-translationally, sumoylation reduces CDK7-mediated phosphorylation on Ser-202. Phosphorylated on Ser-202 by CDK7. This phosphorylation promotes transcriptional activity. As to expression, expressed in the pre-granulosa and Sertoli cells of the ovary and testis, respectively. In the testis it is also present in the interstitial cells. In the adult ovary it is expressed in the interstitial gland, and in the granulosa cells and theca interna of small to medium-sized antral follicles, but is not expressed in large antral follicles.

The protein localises to the nucleus. Its function is as follows. Transcriptional activator. Seems to be essential for sexual differentiation and formation of the primary steroidogenic tissues. Binds to the Ad4 site found in the promoter region of steroidogenic P450 genes such as CYP11A, CYP11B and CYP21B. Also regulates the AMH/Muellerian inhibiting substance gene as well as the AHCH and STAR genes. 5'-YCAAGGYC-3' and 5'-RRAGGTCA-3' are the consensus sequences for the recognition by NR5A1. The SFPQ-NONO-NR5A1 complex binds to the CYP17 promoter and regulates basal and cAMP-dependent transcriptional activity. Binds phosphatidylcholine and phospholipids with a phosphatidylinositol (PI) headgroup, in particular PI(3,4)P2 and PI(3,4,5)P3. Activated by the phosphorylation of NR5A1 by HIPK3 leading to increased steroidogenic gene expression upon cAMP signaling pathway stimulation. The protein is Steroidogenic factor 1 (NR5A1) of Notamacropus eugenii (Tammar wallaby).